The chain runs to 427 residues: Homoprotocatechuate catabolism bifunctional isomerase/decarboxylase (427 aa).

2 Approximate repeats span residues 1–202 and 203–405; these read MKGT…LENP and VVDE…VGDE. Positions 276, 278, and 307 each coordinate a divalent metal cation.

This sequence belongs to the FAH family. Monomer. Requires Mg(2+) as cofactor.

It carries out the reaction (2E,4Z)-5-hydroxypenta-2,4-diene-1,2,5-tricarboxylate = (3E,5R)-5-carboxy-2-oxohept-3-enedioate. The enzyme catalyses (3E,5R)-5-carboxy-2-oxohept-3-enedioate + H(+) = (4Z)-2-oxohept-4-enedioate + CO2. It functions in the pathway aromatic compound metabolism; 4-hydroxyphenylacetate degradation; pyruvate and succinate semialdehyde from 4-hydroxyphenylacetate: step 4/7. Its pathway is aromatic compound metabolism; 4-hydroxyphenylacetate degradation; pyruvate and succinate semialdehyde from 4-hydroxyphenylacetate: step 5/7. Functionally, decarboxylates OPET (5-oxo-pent-3-ene-1,2,5-tricarboxylic acid) into HHDD (2-hydroxy-hept-2,4-diene-1,7-dioate) and isomerizes it to OHED (2-oxo-hept-3-ene-1,7-dioate). The polypeptide is Homoprotocatechuate catabolism bifunctional isomerase/decarboxylase (hpcE) (Escherichia coli).